A 187-amino-acid polypeptide reads, in one-letter code: uncharacterized protein (187 aa).

A signal peptide spans 1-25; the sequence is MSKFVKTAIAAAMVMGAFTSTATIA.

The protein belongs to the fimbrial protein family.

Functionally, part of the yfcOPQRSUV fimbrial operon. Could contribute to adhesion to various surfaces in specific environmental niches. Increases adhesion to eukaryotic T24 bladder epithelial cells in the absence of fim genes. This is an uncharacterized protein from Escherichia coli (strain K12).